The sequence spans 311 residues: Phosphoribosylaminoimidazole-succinocarboxamide synthase (311 aa).

Belongs to the SAICAR synthetase family.

The enzyme catalyses 5-amino-1-(5-phospho-D-ribosyl)imidazole-4-carboxylate + L-aspartate + ATP = (2S)-2-[5-amino-1-(5-phospho-beta-D-ribosyl)imidazole-4-carboxamido]succinate + ADP + phosphate + 2 H(+). Its pathway is purine metabolism; IMP biosynthesis via de novo pathway; 5-amino-1-(5-phospho-D-ribosyl)imidazole-4-carboxamide from 5-amino-1-(5-phospho-D-ribosyl)imidazole-4-carboxylate: step 1/2. The protein is Phosphoribosylaminoimidazole-succinocarboxamide synthase of Aromatoleum aromaticum (strain DSM 19018 / LMG 30748 / EbN1) (Azoarcus sp. (strain EbN1)).